A 151-amino-acid polypeptide reads, in one-letter code: 3-hydroxyacyl-[acyl-carrier-protein] dehydratase FabZ (151 aa).

H54 is an active-site residue.

This sequence belongs to the thioester dehydratase family. FabZ subfamily.

The protein resides in the cytoplasm. The enzyme catalyses a (3R)-hydroxyacyl-[ACP] = a (2E)-enoyl-[ACP] + H2O. Involved in unsaturated fatty acids biosynthesis. Catalyzes the dehydration of short chain beta-hydroxyacyl-ACPs and long chain saturated and unsaturated beta-hydroxyacyl-ACPs. In Erwinia tasmaniensis (strain DSM 17950 / CFBP 7177 / CIP 109463 / NCPPB 4357 / Et1/99), this protein is 3-hydroxyacyl-[acyl-carrier-protein] dehydratase FabZ.